Reading from the N-terminus, the 241-residue chain is Peptidoglycan endopeptidase RipB (241 aa).

The N-terminal stretch at 1 to 31 (MRHTRFHPIKLAWITAVVAGLMVGVATPADA) is a signal peptide. In terms of domain architecture, NlpC/P60 spans 109-241 (RQAVEYVIRR…TPFVTRIIEY (133 aa)). Cys152 (nucleophile) is an active-site residue. The active-site Proton acceptor is His201. The active site involves Glu213.

This sequence belongs to the peptidase C40 family. As to quaternary structure, monomer.

Its function is as follows. Peptidoglycan endopeptidase that cleaves the bond between D-glutamate and meso-diaminopimelate. Binds high-molecular weight peptidoglycan, but does not degrade it. Required for normal separation of daughter cells after cell division and cell wall integrity. Required for host cell invasion. The chain is Peptidoglycan endopeptidase RipB (ripB) from Mycobacterium tuberculosis (strain CDC 1551 / Oshkosh).